The chain runs to 576 residues: Zn(2)-C6 fungal-type transcription factor mpsE (576 aa).

Residues 15–46 (CDRCRSHKLKCPQQPSTATGACQRCTRAKAQC) constitute a DNA-binding region (zn(2)-C6 fungal-type). Over residues 47 to 61 (TFSPRSRAIKNTQDG) the composition is skewed to polar residues. Disordered regions lie at residues 47-123 (TFSP…GTFD), 334-369 (VAHA…SSTA), and 404-424 (HPAP…LHRR). Residues 95–109 (PPQQQQSDQQKPSGS) are compositionally biased toward low complexity.

It localises to the nucleus. Functionally, transcription factor; part of the gene cluster that mediates the biosynthesis of macrophasetins, 3-decalinoyltetramic acids (DTAs) which feature a tetramate (pyrrolidine-2,4-dione) unit connected to a decalin fragment and that have potent bioactivities. The sequence is that of Zn(2)-C6 fungal-type transcription factor mpsE from Macrophomina phaseolina (strain MS6) (Charcoal rot fungus).